A 328-amino-acid polypeptide reads, in one-letter code: Pleckstrin homology domain protein OPY1 (328 aa).

Residues 19 to 52 (NLIKKPSTSQNKTPTAQSSSGNNGAADGAPQGYH) are disordered. Residues 24–41 (PSTSQNKTPTAQSSSGNN) show a composition bias toward polar residues. The required for targeting to the cell membrane stretch occupies residues 213-328 (AEHQVCSGIL…IRKKLKAENI (116 aa)). A PH domain is found at 215–318 (HQVCSGILYT…WIINFKSGIL (104 aa)).

In terms of assembly, interacts with MSS4 (via N-terminus); to negatively regulate MSS4 kinase activity.

Its subcellular location is the cell membrane. It localises to the cytoplasm. Functionally, binds phosphatidylinositol 4,5-bisphosphate (PtdIns(4,5)P2/PIP2) at the cell membrane. Negatively regulates the activity of phosphatidylinositol 4-phosphate 5-kinase MSS4. The chain is Pleckstrin homology domain protein OPY1 (OPY1) from Saccharomyces cerevisiae (strain ATCC 204508 / S288c) (Baker's yeast).